A 334-amino-acid polypeptide reads, in one-letter code: Heat-inducible transcription repressor HrcA (334 aa).

The protein belongs to the HrcA family.

Functionally, negative regulator of class I heat shock genes (grpE-dnaK-dnaJ and groELS operons). Prevents heat-shock induction of these operons. The polypeptide is Heat-inducible transcription repressor HrcA (Paracidovorax citrulli (strain AAC00-1) (Acidovorax citrulli)).